The primary structure comprises 1411 residues: Alpha-latroinsectotoxin-Lt1a (1411 aa).

Residues 1–35 constitute a propeptide that is removed on maturation; that stretch reads ACSSPEVSIFHFFVYAGSFVKNFKKMKGSSAISKR. Residues 245–264 are helix H8 is the probable transmembrane region of the tetrameric pore inserted in the target cell membrane; sequence ALYALFYGTETFISIMFYLV. 20 ANK repeats span residues 462–495, 499–528, 533–562, 567–597, 601–630, 634–663, 667–697, 702–732, 736–765, 769–798, 802–831, 835–864, 869–898, 902–931, 935–965, 968–999, 1000–1029, 1080–1109, 1112–1142, and 1146–1175; these read DIHR…NVSE, LGRG…NLLE, NGYT…DVNV, DLFT…DLNA, SGFT…VINI, VGLT…YLND, NGMT…NINA, KKWT…NIRL, GGIN…DVTR, KGFS…NVND, SGVT…DIKA, NSQM…SLMN, RNEY…NVNE, NGNT…NFRL, ERKT…NLQA, RGKT…LNES, ECNP…NPAE, QENT…DPNQ, DGDP…DINT, and ERFT…DVNA. A propeptide spanning residues 1196 to 1411 is cleaved from the precursor; it reads QSSRFLRSGH…KVNSNVSQIK (216 aa). Positions 1230-1249 are enriched in polar residues; sequence DKLTQQISSKGTRSDSNSTE. Residues 1230–1254 are disordered; the sequence is DKLTQQISSKGTRSDSNSTEGKMHS. The stretch at 1331–1361 is one ANK 21 repeat; the sequence is NVHSKIYKAIMSGRRSVISEMLCSFAEEYSK.

The protein belongs to the cationic peptide 01 (latrotoxin) family. 02 (alpha-latroinsectotoxin) subfamily. Homotetramer in membranes. As to expression, expressed by the venom gland.

The protein resides in the secreted. Its subcellular location is the target cell membrane. Insecticidal presynaptic neurotoxin that induces massive neurotransmitter release at insect (but not vertebrate) neuromuscular junctions. Native toxin forms cation-permeable pores (with high permeability to calcium) in lipid membranes locust muscle membrane and artificial lipid bilayers. May bind to insect neurexin-1 homolog, insect adhesion G protein-coupled receptor L1 homolog, and insect receptor-type tyrosine-protein phosphatase S homolog, and induces neurotransmitter exocytosis both by forming tetrameric pores in membranes and signaling via G protein-coupled receptor. Oligomerization is a process independent of divalent cations. The toxin forms channels with 0.55-0.58 nm entrance diameter and a relatively small conductance in planar phospholipid membranes. This Latrodectus tredecimguttatus (Mediterranean black widow spider) protein is Alpha-latroinsectotoxin-Lt1a.